We begin with the raw amino-acid sequence, 551 residues long: Dihydroxy-acid dehydratase (551 aa).

Residue Asp-78 coordinates Mg(2+). Residue Cys-119 participates in [2Fe-2S] cluster binding. 2 residues coordinate Mg(2+): Asp-120 and Lys-121. Residue Lys-121 is modified to N6-carboxylysine. Position 191 (Cys-191) interacts with [2Fe-2S] cluster. Glu-441 is a Mg(2+) binding site. The Proton acceptor role is filled by Ser-467.

This sequence belongs to the IlvD/Edd family. Homodimer. [2Fe-2S] cluster is required as a cofactor. Requires Mg(2+) as cofactor.

It carries out the reaction (2R)-2,3-dihydroxy-3-methylbutanoate = 3-methyl-2-oxobutanoate + H2O. It catalyses the reaction (2R,3R)-2,3-dihydroxy-3-methylpentanoate = (S)-3-methyl-2-oxopentanoate + H2O. The protein operates within amino-acid biosynthesis; L-isoleucine biosynthesis; L-isoleucine from 2-oxobutanoate: step 3/4. It functions in the pathway amino-acid biosynthesis; L-valine biosynthesis; L-valine from pyruvate: step 3/4. Functions in the biosynthesis of branched-chain amino acids. Catalyzes the dehydration of (2R,3R)-2,3-dihydroxy-3-methylpentanoate (2,3-dihydroxy-3-methylvalerate) into 2-oxo-3-methylpentanoate (2-oxo-3-methylvalerate) and of (2R)-2,3-dihydroxy-3-methylbutanoate (2,3-dihydroxyisovalerate) into 2-oxo-3-methylbutanoate (2-oxoisovalerate), the penultimate precursor to L-isoleucine and L-valine, respectively. This chain is Dihydroxy-acid dehydratase, found in Pyrococcus furiosus (strain ATCC 43587 / DSM 3638 / JCM 8422 / Vc1).